The chain runs to 302 residues: 4-diphosphocytidyl-2-C-methyl-D-erythritol kinase (302 aa).

The active site involves Lys-27. Position 110–120 (Pro-110–Ser-120) interacts with ATP. Residue Asp-152 is part of the active site.

The protein belongs to the GHMP kinase family. IspE subfamily.

The catalysed reaction is 4-CDP-2-C-methyl-D-erythritol + ATP = 4-CDP-2-C-methyl-D-erythritol 2-phosphate + ADP + H(+). It functions in the pathway isoprenoid biosynthesis; isopentenyl diphosphate biosynthesis via DXP pathway; isopentenyl diphosphate from 1-deoxy-D-xylulose 5-phosphate: step 3/6. Functionally, catalyzes the phosphorylation of the position 2 hydroxy group of 4-diphosphocytidyl-2C-methyl-D-erythritol. This Mannheimia succiniciproducens (strain KCTC 0769BP / MBEL55E) protein is 4-diphosphocytidyl-2-C-methyl-D-erythritol kinase.